The primary structure comprises 288 residues: Acetyl-coenzyme A carboxylase carboxyl transferase subunit beta (288 aa).

The CoA carboxyltransferase N-terminal domain occupies 24 to 288; sequence LWVKCPESGE…TRTPRASEAA (265 aa).

This sequence belongs to the AccD/PCCB family. Acetyl-CoA carboxylase is a heterohexamer composed of biotin carboxyl carrier protein (AccB), biotin carboxylase (AccC) and two subunits each of ACCase subunit alpha (AccA) and ACCase subunit beta (AccD).

It localises to the cytoplasm. It catalyses the reaction N(6)-carboxybiotinyl-L-lysyl-[protein] + acetyl-CoA = N(6)-biotinyl-L-lysyl-[protein] + malonyl-CoA. The protein operates within lipid metabolism; malonyl-CoA biosynthesis; malonyl-CoA from acetyl-CoA: step 1/1. Component of the acetyl coenzyme A carboxylase (ACC) complex. Biotin carboxylase (BC) catalyzes the carboxylation of biotin on its carrier protein (BCCP) and then the CO(2) group is transferred by the transcarboxylase to acetyl-CoA to form malonyl-CoA. In Methylocella silvestris (strain DSM 15510 / CIP 108128 / LMG 27833 / NCIMB 13906 / BL2), this protein is Acetyl-coenzyme A carboxylase carboxyl transferase subunit beta.